The primary structure comprises 200 residues: Early E1A 21 kDa protein (200 aa).

Residues 78 to 98 (QDSTTATSAEEPSASTDSISS) are disordered. An LXCXE motif, interaction with host RB1 motif is present at residues 114-118 (LRCYE). A zinc finger lies at 136 to 151 (CSTCGGHEVNGFCSLC). Positions 196 to 200 (SRHDE) match the Nuclear localization signal motif.

In terms of assembly, interaction with host RB1 induces the aberrant dissociation of RB1-E2F1 complex thereby disrupting RB1's activity.

Functionally, E1A protein has both transforming and trans-activating activities. Plays a role in viral genome replication by driving entry of quiescent cells into the cell cycle. Disrupts the function of host retinoblastoma protein RB1/pRb and isoform early E1A 26 kDa protein stabilizes TP53, which are key regulators of the cell cycle. Induces the disassembly of the E2F1 transcription factors from RB1 by direct competition for the same binding site on RB1, with subsequent transcriptional activation of E2F1-regulated S-phase genes. Inactivation of the ability of RB1 to arrest the cell cycle is critical for cellular transformation, uncontrolled cellular growth and proliferation induced by viral infection. Stimulation of progression from G1 to S phase allows the virus to efficiently use the cellular DNA replicating machinery to achieve viral genome replication. This Murine adenovirus A serotype 1 (MAdV-1) protein is Early E1A 21 kDa protein.